Here is a 212-residue protein sequence, read N- to C-terminus: Methylthioribulose-1-phosphate dehydratase (212 aa).

The Zn(2+) site is built by H97 and H99.

The protein belongs to the aldolase class II family. MtnB subfamily. Homotetramer. Requires Zn(2+) as cofactor.

It carries out the reaction 5-(methylsulfanyl)-D-ribulose 1-phosphate = 5-methylsulfanyl-2,3-dioxopentyl phosphate + H2O. It functions in the pathway amino-acid biosynthesis; L-methionine biosynthesis via salvage pathway; L-methionine from S-methyl-5-thio-alpha-D-ribose 1-phosphate: step 2/6. Functionally, catalyzes the dehydration of methylthioribulose-1-phosphate (MTRu-1-P) into 2,3-diketo-5-methylthiopentyl-1-phosphate (DK-MTP-1-P). The sequence is that of Methylthioribulose-1-phosphate dehydratase from Bacillus cereus (strain AH187).